The chain runs to 349 residues: Glycerol-3-phosphate dehydrogenase [NAD(P)+] (349 aa).

Residues W16, R36, and K110 each coordinate NADPH. The sn-glycerol 3-phosphate site is built by K110, G138, and T140. Residue A142 coordinates NADPH. Sn-glycerol 3-phosphate is bound by residues K193, D246, S256, R257, and N258. Residue K193 is the Proton acceptor of the active site. Residue R257 coordinates NADPH. NADPH-binding residues include V281 and E283.

It belongs to the NAD-dependent glycerol-3-phosphate dehydrogenase family.

Its subcellular location is the cytoplasm. It carries out the reaction sn-glycerol 3-phosphate + NAD(+) = dihydroxyacetone phosphate + NADH + H(+). It catalyses the reaction sn-glycerol 3-phosphate + NADP(+) = dihydroxyacetone phosphate + NADPH + H(+). The protein operates within membrane lipid metabolism; glycerophospholipid metabolism. Functionally, catalyzes the reduction of the glycolytic intermediate dihydroxyacetone phosphate (DHAP) to sn-glycerol 3-phosphate (G3P), the key precursor for phospholipid synthesis. In Rhodospirillum rubrum (strain ATCC 11170 / ATH 1.1.1 / DSM 467 / LMG 4362 / NCIMB 8255 / S1), this protein is Glycerol-3-phosphate dehydrogenase [NAD(P)+].